Consider the following 130-residue polypeptide: Blasticidin-S deaminase (130 aa).

The CMP/dCMP-type deaminase domain maps to 1–129; sequence MPLSQEESTL…ELLPSGYVWE (129 aa). S28 provides a ligand contact to substrate. C54 is a binding site for Zn(2+). The active-site Proton donor is the E56. Substrate is bound at residue R82. The Zn(2+) site is built by C88 and C91. Substrate-binding residues include Y126 and W128.

The protein belongs to the cytidine and deoxycytidylate deaminase family. Homotetramer. Zn(2+) serves as cofactor.

The enzyme catalyses blasticidin S + H2O + H(+) = deaminohydroxyblasticidin S + NH4(+). Functionally, catalyzes the deamination of the cytosine moiety of the antibiotics blasticidin S, cytomycin and acetylblasticidin S. In Aspergillus terreus, this protein is Blasticidin-S deaminase (bsd).